The sequence spans 362 residues: Spermidine/putrescine import ATP-binding protein PotA (362 aa).

The ABC transporter domain occupies 6 to 236; the sequence is VELKHVGKRY…PVNHFVADFI (231 aa). 38–45 serves as a coordination point for ATP; that stretch reads GPSGSGKT.

It belongs to the ABC transporter superfamily. Spermidine/putrescine importer (TC 3.A.1.11.1) family. As to quaternary structure, the complex is composed of two ATP-binding proteins (PotA), two transmembrane proteins (PotB and PotC) and a solute-binding protein (PotD).

Its subcellular location is the cell membrane. The enzyme catalyses ATP + H2O + polyamine-[polyamine-binding protein]Side 1 = ADP + phosphate + polyamineSide 2 + [polyamine-binding protein]Side 1.. Its function is as follows. Part of the ABC transporter complex PotABCD involved in spermidine/putrescine import. Responsible for energy coupling to the transport system. The chain is Spermidine/putrescine import ATP-binding protein PotA from Lacticaseibacillus paracasei (strain ATCC 334 / BCRC 17002 / CCUG 31169 / CIP 107868 / KCTC 3260 / NRRL B-441) (Lactobacillus paracasei).